The following is a 338-amino-acid chain: Ketol-acid reductoisomerase (NADP(+)) (338 aa).

One can recognise a KARI N-terminal Rossmann domain in the interval 1-181 (MKVFYDKDAD…GGGRAGIIET (181 aa)). NADP(+) is bound by residues 24–27 (YGSQ), Arg-47, and Ser-52. His-107 is an active-site residue. Position 133 (Gly-133) interacts with NADP(+). Residues 182-327 (NFREETETDL…AKLRAMMPWI (146 aa)) enclose the KARI C-terminal knotted domain. Mg(2+) is bound by residues Asp-190, Glu-194, Glu-226, and Glu-230. Ser-251 contributes to the substrate binding site.

Belongs to the ketol-acid reductoisomerase family. Mg(2+) is required as a cofactor.

It carries out the reaction (2R)-2,3-dihydroxy-3-methylbutanoate + NADP(+) = (2S)-2-acetolactate + NADPH + H(+). It catalyses the reaction (2R,3R)-2,3-dihydroxy-3-methylpentanoate + NADP(+) = (S)-2-ethyl-2-hydroxy-3-oxobutanoate + NADPH + H(+). It functions in the pathway amino-acid biosynthesis; L-isoleucine biosynthesis; L-isoleucine from 2-oxobutanoate: step 2/4. The protein operates within amino-acid biosynthesis; L-valine biosynthesis; L-valine from pyruvate: step 2/4. Its function is as follows. Involved in the biosynthesis of branched-chain amino acids (BCAA). Catalyzes an alkyl-migration followed by a ketol-acid reduction of (S)-2-acetolactate (S2AL) to yield (R)-2,3-dihydroxy-isovalerate. In the isomerase reaction, S2AL is rearranged via a Mg-dependent methyl migration to produce 3-hydroxy-3-methyl-2-ketobutyrate (HMKB). In the reductase reaction, this 2-ketoacid undergoes a metal-dependent reduction by NADPH to yield (R)-2,3-dihydroxy-isovalerate. This is Ketol-acid reductoisomerase (NADP(+)) from Polynucleobacter asymbioticus (strain DSM 18221 / CIP 109841 / QLW-P1DMWA-1) (Polynucleobacter necessarius subsp. asymbioticus).